Reading from the N-terminus, the 162-residue chain is MSGLTHFDAAGHAHMVDVGDKQETRRIAIARGTIRMLPATFALIRDGKAKKGDVLGVARIAAIQGAKRTADLIPLCHPLALTRVAVEFELDDALPGVHCVVQVETFGRTGVEMEALTAVQVGLLTVYDMCKAVDRGMVITDVSVREKRGGKSGDWKAEDAAG.

Residues 75-77 (LCH) and 113-114 (ME) each bind substrate. Residue D128 is part of the active site.

The protein belongs to the MoaC family. Homohexamer; trimer of dimers.

The enzyme catalyses (8S)-3',8-cyclo-7,8-dihydroguanosine 5'-triphosphate = cyclic pyranopterin phosphate + diphosphate. It functions in the pathway cofactor biosynthesis; molybdopterin biosynthesis. Functionally, catalyzes the conversion of (8S)-3',8-cyclo-7,8-dihydroguanosine 5'-triphosphate to cyclic pyranopterin monophosphate (cPMP). This chain is Cyclic pyranopterin monophosphate synthase, found in Burkholderia cenocepacia (strain HI2424).